A 290-amino-acid polypeptide reads, in one-letter code: ATP synthase gamma chain (290 aa).

Belongs to the ATPase gamma chain family. F-type ATPases have 2 components, CF(1) - the catalytic core - and CF(0) - the membrane proton channel. CF(1) has five subunits: alpha(3), beta(3), gamma(1), delta(1), epsilon(1). CF(0) has three main subunits: a, b and c.

It localises to the cell inner membrane. In terms of biological role, produces ATP from ADP in the presence of a proton gradient across the membrane. The gamma chain is believed to be important in regulating ATPase activity and the flow of protons through the CF(0) complex. This is ATP synthase gamma chain from Erythrobacter litoralis (strain HTCC2594).